The chain runs to 309 residues: Pyridoxal 5'-phosphate synthase subunit PDX1.3 (309 aa).

Residue Met1 is modified to N-acetylmethionine. Asp40 serves as a coordination point for D-ribose 5-phosphate. Lys97 serves as the catalytic Schiff-base intermediate with D-ribose 5-phosphate. Gly169 contributes to the D-ribose 5-phosphate binding site. A D-glyceraldehyde 3-phosphate-binding site is contributed by Arg181. D-ribose 5-phosphate contacts are provided by residues Gly230 and 251-252 (GS).

Belongs to the PdxS/SNZ family. As to quaternary structure, homodimer or heterodimer with PDX1.1 or PDX1.2. Interacts with PDX2. As to expression, expressed in cotyledons, rapidly dividing root stele tissues, stems, leaves, flowers, mature pollen, and siliques.

Its subcellular location is the cytoplasm. The protein resides in the cell membrane. It is found in the membrane. It catalyses the reaction aldehydo-D-ribose 5-phosphate + D-glyceraldehyde 3-phosphate + L-glutamine = pyridoxal 5'-phosphate + L-glutamate + phosphate + 3 H2O + H(+). Its pathway is cofactor biosynthesis; pyridoxal 5'-phosphate biosynthesis. Catalyzes the formation of pyridoxal 5'-phosphate from ribose 5-phosphate (RBP), glyceraldehyde 3-phosphate (G3P) and ammonia. The ammonia is provided by PDX2. Can also use ribulose 5-phosphate and dihydroxyacetone phosphate as substrates, resulting from enzyme-catalyzed isomerization of RBP and G3P, respectively. Also plays an indirect role in resistance to singlet oxygen-generating photosensitizers. This is Pyridoxal 5'-phosphate synthase subunit PDX1.3 (PDX13) from Arabidopsis thaliana (Mouse-ear cress).